Here is a 571-residue protein sequence, read N- to C-terminus: Polypeptide N-acetylgalactosaminyltransferase 2 (571 aa).

Residues 1-6 (MRRRSR) are Cytoplasmic-facing. Residues 7–24 (MLLCFAFLWVLGIAYYMY) form a helical; Signal-anchor for type II membrane protein membrane-spanning segment. The Lumenal portion of the chain corresponds to 25–571 (SGGGSALAGG…QWKFTLNLQQ (547 aa)). Ser29 carries an O-linked (Xyl...) (chondroitin sulfate) serine glycan. Over residues 53 to 66 (KKDLHHSNGEEKAQ) the composition is skewed to basic and acidic residues. The interval 53–74 (KKDLHHSNGEEKAQSMETLPPG) is disordered. Disulfide bonds link Cys126–Cys354, Cys345–Cys423, Cys456–Cys473, and Cys496–Cys513. Residues 135–240 (LPATSVVITF…EHWLEPLLER (106 aa)) form a catalytic subdomain A region. Thr143, Asp176, and Arg201 together coordinate substrate. Asp224 contacts Mn(2+). A substrate-binding site is contributed by Ser225. Residue His226 participates in Mn(2+) binding. A catalytic subdomain B region spans residues 300–362 (PIKTPMIAGG…PCSRVGHVFR (63 aa)). Trp331 lines the substrate pocket. His359 is a binding site for Mn(2+). Arg362, His365, and Tyr367 together coordinate substrate. The 124-residue stretch at 443–566 (QDIAFGALQQ…PALSQQWKFT (124 aa)) folds into the Ricin B-type lectin domain. Ser536 carries the post-translational modification Phosphoserine. Cys539 and Cys555 are oxidised to a cystine.

The protein belongs to the glycosyltransferase 2 family. GalNAc-T subfamily. Mn(2+) is required as a cofactor. In terms of tissue distribution, detected in urine (at protein level). Widely expressed.

It localises to the golgi apparatus. The protein resides in the golgi stack membrane. The protein localises to the secreted. It catalyses the reaction L-seryl-[protein] + UDP-N-acetyl-alpha-D-galactosamine = a 3-O-[N-acetyl-alpha-D-galactosaminyl]-L-seryl-[protein] + UDP + H(+). The enzyme catalyses L-threonyl-[protein] + UDP-N-acetyl-alpha-D-galactosamine = a 3-O-[N-acetyl-alpha-D-galactosaminyl]-L-threonyl-[protein] + UDP + H(+). It functions in the pathway protein modification; protein glycosylation. Its function is as follows. Catalyzes the initial reaction in O-linked oligosaccharide biosynthesis, the transfer of an N-acetyl-D-galactosamine residue to a serine or threonine residue on the protein receptor. Has a broad spectrum of substrates for peptides such as EA2, Muc5AC, Muc1a, Muc1b. Probably involved in O-linked glycosylation of the immunoglobulin A1 (IgA1) hinge region. Involved in O-linked glycosylation of APOC-III, ANGPTL3 and PLTP. It participates in the regulation of HDL-C metabolism. This is Polypeptide N-acetylgalactosaminyltransferase 2 (GALNT2) from Homo sapiens (Human).